Consider the following 172-residue polypeptide: WW domain binding protein VOPP1 (172 aa).

The N-terminal stretch at 1–22 is a signal peptide; that stretch reads MRRQPAKVAALLLGLLLECTEA. Topologically, residues 23–60 are extracellular; it reads KKHCWYFEGLYPTYYICRSYEDCCGSRCCVRALSIQRL. Residues 61 to 81 form a helical membrane-spanning segment; that stretch reads WYFWFLLMMGVLFCCGAGFFI. Residues 82-172 lie on the Cytoplasmic side of the membrane; it reads RRRMYPPPLI…PPYEQVVKAK (91 aa). Positions 102–153 are disordered; that stretch reads RQPPNPGPGAQQPGPPYYTDPGGPGMNPVGNSMAMAFQVPPNSPQGSVACPP. Residues 104-119 show a composition bias toward pro residues; it reads PPNPGPGAQQPGPPYY.

Belongs to the VOPP1/ECOP family. In terms of assembly, interacts with WWOX (via WW domain). Widely expressed with highest levels in thymus and ovary.

It is found in the cytoplasmic vesicle membrane. It localises to the late endosome membrane. The protein resides in the lysosome membrane. In terms of biological role, increases the transcriptional activity of NFKB1 by facilitating its nuclear translocation, DNA-binding and associated apoptotic response, when overexpressed. May sequester WWOX in lysosomal vesicles and thereby regulate WWOX role as tumor suppressor. The chain is WW domain binding protein VOPP1 from Homo sapiens (Human).